The following is a 455-amino-acid chain: MPNPDTATMTPREIVQELDRHIVGQHDAKRAVAIALRNRWRRMQLPEELRNEVMPKNILMIGPTGVGKTEIARRLATLANAPFVKVEATRFTEVGYVGKDVEQIIRDLADTSVKLYREQAKVRVRNQAEERAEDRILDALLPRRAAGIGFDPEAARNEPSSQDNETRIKFRRMLRNGELDEREIELDVAVNASMDIMTPPGMEEMGQQLRQMFSNLGSGKSQKRKLTIKAARPLLIEEEAGKLVNEDDVRTAAIEACEQHGIVFIDEIDKVAKRGEAGSSGGDVSREGVQRDLLPLVEGSNVSTKYGTVKTDHILFIASGAFHLAKPSDLIPELQGRFPIRVELTALTKADFVRILTEPKAALIKQYEALLQTEGVALTFAPDAVDRLAEIAAQVNERQENIGARRLHTVLERLLDVLSYEAPDRDGQSVTVDAAYVDAQLGELVQDPDLSRYIL.

ATP contacts are provided by residues valine 23, 65-70 (GVGKTE), aspartate 266, glutamate 333, and arginine 405.

Belongs to the ClpX chaperone family. HslU subfamily. A double ring-shaped homohexamer of HslV is capped on each side by a ring-shaped HslU homohexamer. The assembly of the HslU/HslV complex is dependent on binding of ATP.

Its subcellular location is the cytoplasm. In terms of biological role, ATPase subunit of a proteasome-like degradation complex; this subunit has chaperone activity. The binding of ATP and its subsequent hydrolysis by HslU are essential for unfolding of protein substrates subsequently hydrolyzed by HslV. HslU recognizes the N-terminal part of its protein substrates and unfolds these before they are guided to HslV for hydrolysis. The polypeptide is ATP-dependent protease ATPase subunit HslU (Xanthomonas euvesicatoria pv. vesicatoria (strain 85-10) (Xanthomonas campestris pv. vesicatoria)).